Here is a 448-residue protein sequence, read N- to C-terminus: MFKARIRGIYATALTKLALDWGFEIVQPTQQIINRFGLKPDYSPPDITVKDHESKTGVVTIGECQAVDYFLERLRQYVDPVIAKASAGLHDVFIGRVVGEGLVEAPGGQLMEVPRRYVVQPGSTSVFTVVKPPMGPFRGVAVPEIVVEGKLLELNTTGRVSYSRHIAEQERLRLRILAETKLKNYASIGLRFKSSAKYASEDELAKEAEELYKEMLKISQGGPPGTLLRRGKCIAVVLFDRQAKFKLDEARAAVVPTIRGHHALRGQGLGKCLDLLDYAGADVYEKAVEFLARGRVVIYHVKPWGEVIKMRGEVVKISDDVLVVKRPLRPGGVLDGIGAKIEPGTYALTCVPKSGGYVVHSYYSASGVYLGTYVNINTDPEWGRRIIYIDLLVDKAYGLDGVERVLDADELQRYAHMLPERLRRPEAPGGKICTSEGLTSALPQSSSA.

The disordered stretch occupies residues 426–448 (EAPGGKICTSEGLTSALPQSSSA). Over residues 436–448 (EGLTSALPQSSSA) the composition is skewed to polar residues.

Belongs to the FAU-1 family.

Functionally, probable RNase involved in rRNA stability through maturation and/or degradation of precursor rRNAs. Binds to RNA in loop regions with AU-rich sequences. This Pyrobaculum islandicum (strain DSM 4184 / JCM 9189 / GEO3) protein is Probable ribonuclease FAU-1.